A 558-amino-acid polypeptide reads, in one-letter code: Formate--tetrahydrofolate ligase (558 aa).

Position 67–74 (Thr-67–Thr-74) interacts with ATP.

It belongs to the formate--tetrahydrofolate ligase family.

It catalyses the reaction (6S)-5,6,7,8-tetrahydrofolate + formate + ATP = (6R)-10-formyltetrahydrofolate + ADP + phosphate. Its pathway is one-carbon metabolism; tetrahydrofolate interconversion. In Sphingobium sp. (strain NBRC 103272 / SYK-6), this protein is Formate--tetrahydrofolate ligase.